A 105-amino-acid chain; its full sequence is Putative pterin-4-alpha-carbinolamine dehydratase (105 aa).

This sequence belongs to the pterin-4-alpha-carbinolamine dehydratase family.

It carries out the reaction (4aS,6R)-4a-hydroxy-L-erythro-5,6,7,8-tetrahydrobiopterin = (6R)-L-erythro-6,7-dihydrobiopterin + H2O. This chain is Putative pterin-4-alpha-carbinolamine dehydratase, found in Sinorhizobium medicae (strain WSM419) (Ensifer medicae).